The sequence spans 610 residues: Elongation factor 4 (610 aa).

The tr-type G domain maps to 11-193 (QRIRNFSIVA…KIVQDIPAPT (183 aa)). Residues 23–28 (DHGKST) and 140–143 (NKVD) each bind GTP.

The protein belongs to the TRAFAC class translation factor GTPase superfamily. Classic translation factor GTPase family. LepA subfamily.

It localises to the cell membrane. It carries out the reaction GTP + H2O = GDP + phosphate + H(+). Its function is as follows. Required for accurate and efficient protein synthesis under certain stress conditions. May act as a fidelity factor of the translation reaction, by catalyzing a one-codon backward translocation of tRNAs on improperly translocated ribosomes. Back-translocation proceeds from a post-translocation (POST) complex to a pre-translocation (PRE) complex, thus giving elongation factor G a second chance to translocate the tRNAs correctly. Binds to ribosomes in a GTP-dependent manner. The protein is Elongation factor 4 of Limosilactobacillus fermentum (strain NBRC 3956 / LMG 18251) (Lactobacillus fermentum).